A 515-amino-acid polypeptide reads, in one-letter code: Centromere protein T (515 aa).

Disordered stretches follow at residues 24-156 and 271-411; these read ADSR…KRKQ and LSGK…DPHK. The segment covering 29–44 has biased composition (basic residues); that stretch reads PMRRRSTRINAQRRRS. Over residues 45-58 the composition is skewed to polar residues; sequence QTPYSNRQGSQTKT. T86 carries the post-translational modification Phosphothreonine. A flexible stalk domain region spans residues 94 to 375; sequence ILLTAPESST…DSLPAEQPPP (282 aa). The segment covering 296 to 306 has biased composition (polar residues); it reads SSGTRLQSRMS. Residues S313, S333, S345, S346, S357, and S376 each carry the phosphoserine modification.

This sequence belongs to the CENP-T/CNN1 family. In terms of assembly, component of the CENPA-CAD complex, composed of CENPI, CENPK, CENPL, CENPO, CENPP, CENPQ, CENPR and CENPS. The CENPA-CAD complex is probably recruited on centromeres by the CENPA-NAC complex, at least composed of CENPA, CENPC, CENPH, CENPM, CENPN, CENPT and CENPU. Identified in a centromeric complex containing histones H2A, H2B, H3 and H4, and at least CENPA, CENPB, CENPC, CENPT, CENPN, HJURP, SUPT16H, SSRP1 and RSF1. Interacts (via N-terminus) with the NDC80 complex. Heterodimer with CENPW; this dimer coassembles with CENPS-CENPX heterodimers at centromeres to form the tetrameric CENP-T-W-S-X complex. In terms of processing, dynamically phosphorylated during the cell cycle. Phosphorylated during G2 phase, metaphase and anaphase, but not during telophase or G1 phase.

Its subcellular location is the nucleus. It localises to the chromosome. The protein resides in the centromere. The protein localises to the kinetochore. In terms of biological role, component of the CENPA-NAC (nucleosome-associated) complex, a complex that plays a central role in assembly of kinetochore proteins, mitotic progression and chromosome segregation. The CENPA-NAC complex recruits the CENPA-CAD (nucleosome distal) complex and may be involved in incorporation of newly synthesized CENPA into centromeres. Part of a nucleosome-associated complex that binds specifically to histone H3-containing nucleosomes at the centromere, as opposed to nucleosomes containing CENPA. Component of the heterotetrameric CENP-T-W-S-X complex that binds and supercoils DNA, and plays an important role in kinetochore assembly. CENPT has a fundamental role in kinetochore assembly and function. It is one of the inner kinetochore proteins, with most further proteins binding downstream. Required for normal chromosome organization and normal progress through mitosis. This Mus musculus (Mouse) protein is Centromere protein T (Cenpt).